The chain runs to 637 residues: Rab11 family-interacting protein 4 (637 aa).

An EF-hand domain is found at 49-84; it reads GQGEEVEKLVKYLDPNDLGRINFKDFCRGVFAMKGC. Ca(2+)-binding residues include D62, N64, R68, and D73. The tract at residues 82–637 is necessary for interaction with RAB11A, subcellular location, homo- or heterooligomerization; the sequence is KGCEELLKDV…HNPSILEIKH (556 aa). Disordered regions lie at residues 138 to 175 and 219 to 256; these read EEEAMTLAPPEGPQELYTDSPMESTQSLEGSVGSPAEK and YGEGDDVDCAPSSPCPDDETRTNVYSDLGSSVSSSAGQ. Residues 280–617 adopt a coiled-coil conformation; that stretch reads KINLLNDLEA…EEINFRLRQY (338 aa). The region spanning 574-636 is the FIP-RBD domain; that stretch reads EAKNLFAAQT…DHNPSILEIK (63 aa).

In terms of assembly, homodimer. Forms a complex with Rab11 (RAB11A or RAB11B) and ARF6. Interacts with RAB11A; the interaction is direct. Forms a heterooligomeric complex with RAB11FIP2, RAB11FIP3 and RAB11FIP5. Interacts with ECPAS. As to quaternary structure, (Microbial infection) Interacts with human cytomegalovirus/HHV-5 protein gM/UL100. In terms of tissue distribution, present at high level in testis (at protein level). Weakly expressed in other tissues.

Its subcellular location is the endosome. It is found in the cytoplasm. It localises to the cytoskeleton. The protein resides in the spindle. The protein localises to the microtubule organizing center. Its subcellular location is the centrosome. It is found in the recycling endosome membrane. It localises to the cleavage furrow. The protein resides in the midbody. The protein localises to the cytoplasmic vesicle. Functionally, acts as a regulator of endocytic traffic by participating in membrane delivery. Required for the abscission step in cytokinesis, possibly by acting as an 'address tag' delivering recycling endosome membranes to the cleavage furrow during late cytokinesis. In case of infection by HCMV (human cytomegalovirus), may participate in egress of the virus out of nucleus; this function is independent of ARF6. The sequence is that of Rab11 family-interacting protein 4 (RAB11FIP4) from Homo sapiens (Human).